A 755-amino-acid chain; its full sequence is Histone-lysine N-methyltransferase, H3 lysine-9 specific SUVH8 (755 aa).

2 disordered regions span residues 62–98 (YDRD…PPQT) and 111–243 (YDRD…KMVI). 2 stretches are compositionally biased toward basic and acidic residues: residues 73 to 86 (VHRE…EEAH) and 122 to 135 (IDRE…EDAH). Residues 174 to 186 (KRGRGRPKGSKNG) constitute a DNA-binding region (a.T hook). Over residues 174 to 193 (KRGRGRPKGSKNGSRKPKKP) the composition is skewed to basic residues. The segment covering 197-207 (DNNSTDASAGP) has biased composition (polar residues). The span at 212–231 (GKRRCGRPKGLKNRSRKPKK) shows a compositional bias: basic residues. The YDG domain maps to 310–448 (GPIPGVQVGD…FKEYRFKLLR (139 aa)). Positions 528-578 (QSLVQSYIHQNCTCILKNCGQLPYHDNILVCRKPLIYECGGSCPTRMVETG) constitute a Pre-SET domain. The region spanning 581–723 (LHLEVFKTSN…PMTELTYDYG (143 aa)) is the SET domain. Residues 591–593 (CGW), D624, Y626, R676, and 679–680 (NH) contribute to the S-adenosyl-L-methionine site. 4 residues coordinate Zn(2+): C682, C743, C745, and C750. One can recognise a Post-SET domain in the interval 739 to 755 (GKKICLCGSVKCRGSFG).

This sequence belongs to the class V-like SAM-binding methyltransferase superfamily. Histone-lysine methyltransferase family. Suvar3-9 subfamily.

It is found in the nucleus. The protein resides in the chromosome. It localises to the centromere. It catalyses the reaction N(6)-methyl-L-lysyl(9)-[histone H3] + S-adenosyl-L-methionine = N(6),N(6)-dimethyl-L-lysyl(9)-[histone H3] + S-adenosyl-L-homocysteine + H(+). The catalysed reaction is L-lysyl(9)-[histone H3] + S-adenosyl-L-methionine = N(6)-methyl-L-lysyl(9)-[histone H3] + S-adenosyl-L-homocysteine + H(+). Functionally, histone methyltransferase. Methylates 'Lys-9' of histone H3. H3 'Lys-9' methylation represents a specific tag for epigenetic transcriptional repression. In Arabidopsis thaliana (Mouse-ear cress), this protein is Histone-lysine N-methyltransferase, H3 lysine-9 specific SUVH8 (SUVH8).